Reading from the N-terminus, the 96-residue chain is MNLRPLHDRVIVKRIESETTTASGIVIPDNAAEKPDQGEVLAVGPGKKNDKGELIALNVKVGDRVLFGKYSGQTVKVHRDELLVMKEDDLFAVVEK.

Belongs to the GroES chaperonin family. As to quaternary structure, heptamer of 7 subunits arranged in a ring. Interacts with the chaperonin GroEL.

Its subcellular location is the cytoplasm. Functionally, together with the chaperonin GroEL, plays an essential role in assisting protein folding. The GroEL-GroES system forms a nano-cage that allows encapsulation of the non-native substrate proteins and provides a physical environment optimized to promote and accelerate protein folding. GroES binds to the apical surface of the GroEL ring, thereby capping the opening of the GroEL channel. This chain is Co-chaperonin GroES, found in Verminephrobacter eiseniae (strain EF01-2).